The following is a 297-amino-acid chain: Large ribosomal subunit protein uL18 (297 aa).

A Glycyl lysine isopeptide (Lys-Gly) (interchain with G-Cter in ubiquitin) cross-link involves residue lysine 164. 3 positions are modified to phosphoserine: serine 167, serine 176, and serine 235.

This sequence belongs to the universal ribosomal protein uL18 family. In terms of assembly, component of the large ribosomal subunit (LSU). Mature yeast ribosomes consist of a small (40S) and a large (60S) subunit. The 40S small subunit contains 1 molecule of ribosomal RNA (18S rRNA) and 33 different proteins (encoded by 57 genes). The large 60S subunit contains 3 rRNA molecules (25S, 5.8S and 5S rRNA) and 46 different proteins (encoded by 81 genes). Component of a hexameric 5S RNP precursor complex, composed of 5S RNA, RRS1, RPF2, RPL5, RPL11A/RPL11B and SYO1; this complex acts as a precursor for ribosome assembly. RPL5/uL18 forms a heterotrimeric complex with SYO1 and RPL11A/RPL11B/uL5. Interaction of this complex with KAP104 allows the nuclear import of the heterotrimer.

The protein localises to the cytoplasm. Its subcellular location is the nucleus. Component of the ribosome, a large ribonucleoprotein complex responsible for the synthesis of proteins in the cell. The small ribosomal subunit (SSU) binds messenger RNAs (mRNAs) and translates the encoded message by selecting cognate aminoacyl-transfer RNA (tRNA) molecules. The large subunit (LSU) contains the ribosomal catalytic site termed the peptidyl transferase center (PTC), which catalyzes the formation of peptide bonds, thereby polymerizing the amino acids delivered by tRNAs into a polypeptide chain. The nascent polypeptides leave the ribosome through a tunnel in the LSU and interact with protein factors that function in enzymatic processing, targeting, and the membrane insertion of nascent chains at the exit of the ribosomal tunnel. This is Large ribosomal subunit protein uL18 from Saccharomyces cerevisiae (strain ATCC 204508 / S288c) (Baker's yeast).